A 383-amino-acid chain; its full sequence is S-adenosylmethionine synthase (383 aa).

Histidine 15 contributes to the ATP binding site. Aspartate 17 lines the Mg(2+) pocket. Glutamate 43 is a K(+) binding site. Residues glutamate 56 and glutamine 99 each contribute to the L-methionine site. Positions 99-109 (QSPDINQGVDR) are flexible loop. Residues 164-166 (DAK), 230-231 (RF), aspartate 239, 245-246 (RK), alanine 262, and lysine 266 each bind ATP. Residue aspartate 239 coordinates L-methionine. Lysine 270 serves as a coordination point for L-methionine.

This sequence belongs to the AdoMet synthase family. Homotetramer; dimer of dimers. Mg(2+) serves as cofactor. It depends on K(+) as a cofactor.

The protein resides in the cytoplasm. It carries out the reaction L-methionine + ATP + H2O = S-adenosyl-L-methionine + phosphate + diphosphate. It functions in the pathway amino-acid biosynthesis; S-adenosyl-L-methionine biosynthesis; S-adenosyl-L-methionine from L-methionine: step 1/1. Catalyzes the formation of S-adenosylmethionine (AdoMet) from methionine and ATP. The overall synthetic reaction is composed of two sequential steps, AdoMet formation and the subsequent tripolyphosphate hydrolysis which occurs prior to release of AdoMet from the enzyme. This Shewanella amazonensis (strain ATCC BAA-1098 / SB2B) protein is S-adenosylmethionine synthase.